The following is a 638-amino-acid chain: 1-deoxy-D-xylulose-5-phosphate synthase (638 aa).

Thiamine diphosphate contacts are provided by residues His74 and 115–117 (GHS). A Mg(2+)-binding site is contributed by Asp146. Thiamine diphosphate contacts are provided by residues 147–148 (GA), Asn175, Tyr286, and Glu366. Asn175 serves as a coordination point for Mg(2+).

Belongs to the transketolase family. DXPS subfamily. Homodimer. Mg(2+) serves as cofactor. The cofactor is thiamine diphosphate.

It carries out the reaction D-glyceraldehyde 3-phosphate + pyruvate + H(+) = 1-deoxy-D-xylulose 5-phosphate + CO2. The protein operates within metabolic intermediate biosynthesis; 1-deoxy-D-xylulose 5-phosphate biosynthesis; 1-deoxy-D-xylulose 5-phosphate from D-glyceraldehyde 3-phosphate and pyruvate: step 1/1. Its function is as follows. Catalyzes the acyloin condensation reaction between C atoms 2 and 3 of pyruvate and glyceraldehyde 3-phosphate to yield 1-deoxy-D-xylulose-5-phosphate (DXP). This Syntrophomonas wolfei subsp. wolfei (strain DSM 2245B / Goettingen) protein is 1-deoxy-D-xylulose-5-phosphate synthase.